The sequence spans 335 residues: MPSFRPNISNDLDTIIFECNSNYDTIVEVTKWFLQIAYLIPGGILNILLLYTILFKNSEIYASSSFFLIYSTDCFVSFSMIFLDIIGRTLVYFTPLCPIIAPMFYEPLIGFKIMMIVLHHSRACKSLIQILLVVNRMSCVIYPIRYGKMWMRPLKYLIILVFVIPFSIDWNLIISRVYMQPTFGGIYMEYIKKVAWASQSRFQLIFITIALLFTIVCTSVIFYTLVMLPKRLRNVERTLSLGTAYISMSFIILVVFQFLFAFYSDIFTTSTIFGYSLLSYDILNVGSPIIMHCVSSKLRNHVLRGSRKLSSAARVVPVSNVTSTNGWVNLIVITL.

The next 7 membrane-spanning stretches (helical) occupy residues 33-53 (FLQIAYLIPGGILNILLLYTI), 66-86 (FFLIYSTDCFVSFSMIFLDII), 98-118 (PIIAPMFYEPLIGFKIMMIVL), 154-174 (LKYLIILVFVIPFSIDWNLII), 202-222 (FQLIFITIALLFTIVCTSVIF), 242-262 (GTAYISMSFIILVVFQFLFAF), and 271-291 (TIFGYSLLSYDILNVGSPIIM).

The protein belongs to the nematode receptor-like protein srg family.

The protein resides in the membrane. This chain is Serpentine receptor class gamma-11 (srg-11), found in Caenorhabditis elegans.